Consider the following 354-residue polypeptide: Uroporphyrinogen decarboxylase (354 aa).

Substrate is bound by residues 25-29, Asp-75, Tyr-152, Thr-207, and His-330; that span reads RQAGR.

It belongs to the uroporphyrinogen decarboxylase family. Homodimer.

The protein localises to the cytoplasm. It carries out the reaction uroporphyrinogen III + 4 H(+) = coproporphyrinogen III + 4 CO2. Its pathway is porphyrin-containing compound metabolism; protoporphyrin-IX biosynthesis; coproporphyrinogen-III from 5-aminolevulinate: step 4/4. Catalyzes the decarboxylation of four acetate groups of uroporphyrinogen-III to yield coproporphyrinogen-III. The polypeptide is Uroporphyrinogen decarboxylase (Xanthomonas oryzae pv. oryzae (strain MAFF 311018)).